The sequence spans 80 residues: DNA-binding protein HU-like (80 aa).

The protein belongs to the bacterial histone-like protein family.

In terms of biological role, histone-like DNA-binding protein which is capable of wrapping DNA to stabilize it, and thus to prevent its denaturation under extreme environmental conditions. The polypeptide is DNA-binding protein HU-like (Rickettsia conorii (strain ATCC VR-613 / Malish 7)).